The sequence spans 191 residues: dTTP/UTP pyrophosphatase (191 aa).

The Proton acceptor role is filled by aspartate 70.

This sequence belongs to the Maf family. YhdE subfamily. A divalent metal cation is required as a cofactor.

The protein resides in the cytoplasm. It carries out the reaction dTTP + H2O = dTMP + diphosphate + H(+). It catalyses the reaction UTP + H2O = UMP + diphosphate + H(+). Its function is as follows. Nucleoside triphosphate pyrophosphatase that hydrolyzes dTTP and UTP. May have a dual role in cell division arrest and in preventing the incorporation of modified nucleotides into cellular nucleic acids. The protein is dTTP/UTP pyrophosphatase of Clostridium novyi (strain NT).